Here is a 623-residue protein sequence, read N- to C-terminus: Isocitrate dehydrogenase kinase/phosphatase (623 aa).

Residues 344-350 (APGIKGM) and Lys-365 contribute to the ATP site. Asp-400 is a catalytic residue.

Belongs to the AceK family.

The protein resides in the cytoplasm. The enzyme catalyses L-seryl-[isocitrate dehydrogenase] + ATP = O-phospho-L-seryl-[isocitrate dehydrogenase] + ADP + H(+). Bifunctional enzyme which can phosphorylate or dephosphorylate isocitrate dehydrogenase (IDH) on a specific serine residue. This is a regulatory mechanism which enables bacteria to bypass the Krebs cycle via the glyoxylate shunt in response to the source of carbon. When bacteria are grown on glucose, IDH is fully active and unphosphorylated, but when grown on acetate or ethanol, the activity of IDH declines drastically concomitant with its phosphorylation. The chain is Isocitrate dehydrogenase kinase/phosphatase from Polaromonas naphthalenivorans (strain CJ2).